A 115-amino-acid polypeptide reads, in one-letter code: Pro-neuregulin-4, membrane-bound isoform (115 aa).

The Extracellular segment spans residues 1 to 62 (MPTDHEQPCG…SSIPSESNLS (62 aa)). The 42-residue stretch at 5-46 (HEQPCGPRHRSFCLNGGICYVIPTIPSPFCRCIENYTGARCE) folds into the EGF-like domain. 3 cysteine pairs are disulfide-bonded: Cys9/Cys23, Cys17/Cys34, and Cys36/Cys45. Residues Asn39 and Asn60 are each glycosylated (N-linked (GlcNAc...) asparagine). The helical transmembrane segment at 63 to 83 (AAFVVLAVLLTLTIAALCFLC) threads the bilayer. Topologically, residues 84–115 (RKGHLQRASSVQCEISLVETNNTRTRHSHREH) are cytoplasmic.

It belongs to the neuregulin family. In terms of assembly, interacts with ERBB4. In terms of processing, proteolytic cleavage close to the plasma membrane on the external face leads to the release of the soluble growth factor form. Extensive glycosylation precedes the proteolytic cleavage. Highly expressed in pancreas; weakly expressed in muscle.

It localises to the cell membrane. The protein localises to the secreted. Low affinity ligand for the ERBB4 tyrosine kinase receptor. Concomitantly recruits ERBB1 and ERBB2 coreceptors, resulting in ligand-stimulated tyrosine phosphorylation and activation of the ERBB receptors. Does not bind to the ERBB1, ERBB2 and ERBB3 receptors. This chain is Pro-neuregulin-4, membrane-bound isoform (Nrg4), found in Mus musculus (Mouse).